The chain runs to 293 residues: Ribosomal protein L11 methyltransferase (293 aa).

Positions 145, 166, 188, and 230 each coordinate S-adenosyl-L-methionine.

This sequence belongs to the methyltransferase superfamily. PrmA family.

Its subcellular location is the cytoplasm. The enzyme catalyses L-lysyl-[protein] + 3 S-adenosyl-L-methionine = N(6),N(6),N(6)-trimethyl-L-lysyl-[protein] + 3 S-adenosyl-L-homocysteine + 3 H(+). Its function is as follows. Methylates ribosomal protein L11. The chain is Ribosomal protein L11 methyltransferase from Actinobacillus pleuropneumoniae serotype 7 (strain AP76).